A 114-amino-acid chain; its full sequence is Somatostatin-1A (114 aa).

The first 24 residues, Met-1–Ala-24, serve as a signal peptide directing secretion. A propeptide spanning residues Ala-25–Arg-88 is cleaved from the precursor. Cysteines 103 and 114 form a disulfide.

The protein belongs to the somatostatin family.

The protein localises to the secreted. Functionally, somatostatin inhibits the release of somatotropin. The chain is Somatostatin-1A (sst1a) from Carassius auratus (Goldfish).